The following is a 128-amino-acid chain: Protein BEX2 (128 aa).

Arg50 is modified (omega-N-methylarginine). The segment at Ser107–Pro128 is disordered. Residues Pro115 to Pro128 are compositionally biased toward basic and acidic residues. Residues His117–His121 are his cluster. Cys125 contacts Zn(2+).

It belongs to the BEX family. Interacts with LMO2, possibly leading to regulate the transcriptional activity of a DNA-binding complex containing LMO2. Interacts with OMP. In terms of tissue distribution, expressed in central nervous system, with high level in pituitary, cerebellum and temporal lobe. Widely expressed in breast cancer cell lines.

It is found in the cytoplasm. The protein resides in the nucleus. In terms of biological role, regulator of mitochondrial apoptosis and G1 cell cycle in breast cancer. Protects the breast cancer cells against mitochondrial apoptosis and this effect is mediated through the modulation of BCL2 protein family, which involves the positive regulation of anti-apoptotic member BCL2 and the negative regulation of pro-apoptotic members BAD, BAK1 and PUMA. Required for the normal cell cycle progression during G1 in breast cancer cells through the regulation of CCND1 and CDKN1A. Regulates the level of PP2A regulatory subunit B and PP2A phosphatase activity. In absence of reductive stress, acts as a pseudosubstrate for the CRL2(FEM1B) complex: associates with FEM1B via zinc, thereby preventing association between FEM1B and its substrates. The polypeptide is Protein BEX2 (BEX2) (Homo sapiens (Human)).